Reading from the N-terminus, the 302-residue chain is Sulfate adenylyltransferase subunit 2 (302 aa).

The protein belongs to the PAPS reductase family. CysD subfamily. As to quaternary structure, heterodimer composed of CysD, the smaller subunit, and CysN.

The enzyme catalyses sulfate + ATP + H(+) = adenosine 5'-phosphosulfate + diphosphate. It functions in the pathway sulfur metabolism; hydrogen sulfide biosynthesis; sulfite from sulfate: step 1/3. With CysN forms the ATP sulfurylase (ATPS) that catalyzes the adenylation of sulfate producing adenosine 5'-phosphosulfate (APS) and diphosphate, the first enzymatic step in sulfur assimilation pathway. APS synthesis involves the formation of a high-energy phosphoric-sulfuric acid anhydride bond driven by GTP hydrolysis by CysN coupled to ATP hydrolysis by CysD. The chain is Sulfate adenylyltransferase subunit 2 from Citrobacter koseri (strain ATCC BAA-895 / CDC 4225-83 / SGSC4696).